The following is a 343-amino-acid chain: Dihydroorotase (343 aa).

H13 and H15 together coordinate Zn(2+). Residues 15-17 (HLR) and N41 contribute to the substrate site. Zn(2+) is bound by residues K99, H136, and H174. An N6-carboxylysine modification is found at K99. H136 serves as a coordination point for substrate. L219 is a substrate binding site. D247 contributes to the Zn(2+) binding site. D247 is an active-site residue. Positions 251 and 263 each coordinate substrate.

Belongs to the metallo-dependent hydrolases superfamily. DHOase family. Class II DHOase subfamily. As to quaternary structure, homodimer. Zn(2+) serves as cofactor.

The catalysed reaction is (S)-dihydroorotate + H2O = N-carbamoyl-L-aspartate + H(+). It participates in pyrimidine metabolism; UMP biosynthesis via de novo pathway; (S)-dihydroorotate from bicarbonate: step 3/3. Catalyzes the reversible cyclization of carbamoyl aspartate to dihydroorotate. The polypeptide is Dihydroorotase (Shewanella baltica (strain OS223)).